The sequence spans 339 residues: uncharacterized protein (339 aa).

The N-terminal stretch at 1–29 is a signal peptide; the sequence is MIKQVCKNITICSLALSTALTVFPASSYA.

It belongs to the aerolysin family.

This is an uncharacterized protein from Staphylococcus aureus (strain MRSA252).